We begin with the raw amino-acid sequence, 191 residues long: Thymidine kinase (191 aa).

ATP contacts are provided by residues 9 to 16 (GSMNSGKT) and 85 to 88 (DESQ). Catalysis depends on Glu86, which acts as the Proton acceptor. Zn(2+) contacts are provided by Cys143, Cys146, Cys181, and Cys184.

It belongs to the thymidine kinase family. In terms of assembly, homotetramer.

The protein localises to the cytoplasm. It catalyses the reaction thymidine + ATP = dTMP + ADP + H(+). This chain is Thymidine kinase, found in Listeria innocua serovar 6a (strain ATCC BAA-680 / CLIP 11262).